The primary structure comprises 105 residues: Cyclotide vibi-J (105 aa).

A signal peptide spans 1–9 (AAFALPALA). The propeptide occupies 10–71 (TSFEKDFITH…KSSNSINALG (62 aa)). Positions 72-102 (GTFPCGESCVWIPCISKVIGCACKSKVCYKN) form a cross-link, cyclopeptide (Gly-Asn). Disulfide bonds link Cys-76–Cys-92, Cys-80–Cys-94, and Cys-85–Cys-99. A propeptide spanning residues 103-105 (SLA) is cleaved from the precursor.

In terms of processing, this is a cyclic peptide.

In terms of biological role, probably participates in a plant defense mechanism. The chain is Cyclotide vibi-J from Viola biflora (Yellow wood violet).